A 415-amino-acid chain; its full sequence is Lipoyl synthase, mitochondrial (415 aa).

Residues 1–32 (MAASTNRLRFLYSSARTVPQTGSITPISRRTY) constitute a mitochondrion transit peptide. A compositionally biased stretch (polar residues) spans 20–32 (QTGSITPISRRTY). The tract at residues 20–53 (QTGSITPISRRTYATTEPSPSATGAPATARKRTN) is disordered. Residues 33–47 (ATTEPSPSATGAPAT) are compositionally biased toward low complexity. 7 residues coordinate [4Fe-4S] cluster: C132, C137, C143, C163, C167, C170, and S378. Positions 146–367 (GSDKSAATAT…RQRALDMGFL (222 aa)) constitute a Radical SAM core domain. The segment at 395–415 (AAGTAGESVTDSKAAVDEATR) is disordered.

This sequence belongs to the radical SAM superfamily. Lipoyl synthase family. Requires [4Fe-4S] cluster as cofactor.

The protein localises to the mitochondrion. It carries out the reaction [[Fe-S] cluster scaffold protein carrying a second [4Fe-4S](2+) cluster] + N(6)-octanoyl-L-lysyl-[protein] + 2 oxidized [2Fe-2S]-[ferredoxin] + 2 S-adenosyl-L-methionine + 4 H(+) = [[Fe-S] cluster scaffold protein] + N(6)-[(R)-dihydrolipoyl]-L-lysyl-[protein] + 4 Fe(3+) + 2 hydrogen sulfide + 2 5'-deoxyadenosine + 2 L-methionine + 2 reduced [2Fe-2S]-[ferredoxin]. It participates in protein modification; protein lipoylation via endogenous pathway; protein N(6)-(lipoyl)lysine from octanoyl-[acyl-carrier-protein]: step 2/2. Its function is as follows. Catalyzes the radical-mediated insertion of two sulfur atoms into the C-6 and C-8 positions of the octanoyl moiety bound to the lipoyl domains of lipoate-dependent enzymes, thereby converting the octanoylated domains into lipoylated derivatives. This chain is Lipoyl synthase, mitochondrial, found in Aspergillus flavus (strain ATCC 200026 / FGSC A1120 / IAM 13836 / NRRL 3357 / JCM 12722 / SRRC 167).